The sequence spans 201 residues: Small ribosomal subunit protein uS4c (201 aa).

Residues Met89 to Pro157 enclose the S4 RNA-binding domain.

It belongs to the universal ribosomal protein uS4 family. In terms of assembly, part of the 30S ribosomal subunit. Contacts protein S5. The interaction surface between S4 and S5 is involved in control of translational fidelity.

It localises to the plastid. Its subcellular location is the chloroplast. Its function is as follows. One of the primary rRNA binding proteins, it binds directly to 16S rRNA where it nucleates assembly of the body of the 30S subunit. Functionally, with S5 and S12 plays an important role in translational accuracy. The sequence is that of Small ribosomal subunit protein uS4c (rps4) from Hordeum vulgare (Barley).